The following is a 491-amino-acid chain: MKLHTLVSCLHDFPVVPKENPEITSIEADSRKVKEGSLFVCMKGYTVDSHDFAKQAAAQGAAAIVAERPIDVDVPVVLVKNTFRSLAVLADYFYGQPTHKLHLIGITGTNGKTTTSHIMDEIMRAHGHKTGLIGTINMKIGDETFEVKNTTPDALTLQQTFSKMVEQGVDSTVMEVSSHALDLGRVHGCDYDVAVFTNLTQDHLDYHKTMEEYKHAKGLLFAQLGNSYNHNREKYAVLNSDDNVTEEYMRSTAATVVTYGIDTTSDIMAKNIVMTSGGTTFTLVTPYESVNVTMKLIGKFNVYNVLAATAAGLVSGVKLETIIAVIKDLAGVPGRFEVVDGGQNYTVIVDYAHTPDSLENVLKTAKQFAKGDVYCIVGCGGDRDRTKRPIMASVATKYATHAIYTSDNPRSEDPAAILDDMVHGASGKNYEMIIDRKEAIHHAIAKAKADDIIIIAGKGHETYQIIGKEVHHFDDREVAKEAITGRLNNEE.

Residue S30 participates in UDP-N-acetyl-alpha-D-muramoyl-L-alanyl-D-glutamate binding. ATP is bound at residue 108-114; it reads GTNGKTT. Residues N149, 150–151, S177, and R185 contribute to the UDP-N-acetyl-alpha-D-muramoyl-L-alanyl-D-glutamate site; that span reads TT. N6-carboxylysine is present on K217. Meso-2,6-diaminopimelate contacts are provided by residues R383, 407 to 410, G457, and E461; that span reads DNPR. Residues 407–410 carry the Meso-diaminopimelate recognition motif motif; the sequence is DNPR.

This sequence belongs to the MurCDEF family. MurE subfamily. Mg(2+) is required as a cofactor. Post-translationally, carboxylation is probably crucial for Mg(2+) binding and, consequently, for the gamma-phosphate positioning of ATP.

It localises to the cytoplasm. The enzyme catalyses UDP-N-acetyl-alpha-D-muramoyl-L-alanyl-D-glutamate + meso-2,6-diaminopimelate + ATP = UDP-N-acetyl-alpha-D-muramoyl-L-alanyl-gamma-D-glutamyl-meso-2,6-diaminopimelate + ADP + phosphate + H(+). The protein operates within cell wall biogenesis; peptidoglycan biosynthesis. Catalyzes the addition of meso-diaminopimelic acid to the nucleotide precursor UDP-N-acetylmuramoyl-L-alanyl-D-glutamate (UMAG) in the biosynthesis of bacterial cell-wall peptidoglycan. This chain is UDP-N-acetylmuramoyl-L-alanyl-D-glutamate--2,6-diaminopimelate ligase, found in Bacillus cereus (strain ATCC 14579 / DSM 31 / CCUG 7414 / JCM 2152 / NBRC 15305 / NCIMB 9373 / NCTC 2599 / NRRL B-3711).